A 173-amino-acid polypeptide reads, in one-letter code: Crossover junction endodeoxyribonuclease RuvC (173 aa).

Active-site residues include Asp-8, Glu-67, and Asp-139. Mg(2+)-binding residues include Asp-8, Glu-67, and Asp-139.

It belongs to the RuvC family. In terms of assembly, homodimer which binds Holliday junction (HJ) DNA. The HJ becomes 2-fold symmetrical on binding to RuvC with unstacked arms; it has a different conformation from HJ DNA in complex with RuvA. In the full resolvosome a probable DNA-RuvA(4)-RuvB(12)-RuvC(2) complex forms which resolves the HJ. Mg(2+) is required as a cofactor.

It is found in the cytoplasm. It carries out the reaction Endonucleolytic cleavage at a junction such as a reciprocal single-stranded crossover between two homologous DNA duplexes (Holliday junction).. Its function is as follows. The RuvA-RuvB-RuvC complex processes Holliday junction (HJ) DNA during genetic recombination and DNA repair. Endonuclease that resolves HJ intermediates. Cleaves cruciform DNA by making single-stranded nicks across the HJ at symmetrical positions within the homologous arms, yielding a 5'-phosphate and a 3'-hydroxyl group; requires a central core of homology in the junction. The consensus cleavage sequence is 5'-(A/T)TT(C/G)-3'. Cleavage occurs on the 3'-side of the TT dinucleotide at the point of strand exchange. HJ branch migration catalyzed by RuvA-RuvB allows RuvC to scan DNA until it finds its consensus sequence, where it cleaves and resolves the cruciform DNA. The chain is Crossover junction endodeoxyribonuclease RuvC from Shewanella pealeana (strain ATCC 700345 / ANG-SQ1).